Reading from the N-terminus, the 152-residue chain is Large ribosomal subunit protein uL15 (152 aa).

The segment at 1–54 is disordered; it reads MGLKLNELSPGVGAKKTAHRKGRGIGSGLGKTGGRGVKGQKSRSGSGVRRGFEG. Gly residues predominate over residues 24–37; sequence GIGSGLGKTGGRGV.

The protein belongs to the universal ribosomal protein uL15 family. As to quaternary structure, part of the 50S ribosomal subunit.

Functionally, binds to the 23S rRNA. In Psychrobacter sp. (strain PRwf-1), this protein is Large ribosomal subunit protein uL15.